A 445-amino-acid polypeptide reads, in one-letter code: 23S rRNA (uracil(1939)-C(5))-methyltransferase RlmD (445 aa).

The TRAM domain occupies 12–70 (SKQLSSKLSLKVTQLDHLGAGIAHHDGKIVFINGALPGETVSVQLTEQKKKFARAKLLK). Positions 83, 89, 92, and 171 each coordinate [4Fe-4S] cluster. Gln278, Phe307, Asn312, Glu328, Asp355, and Asp375 together coordinate S-adenosyl-L-methionine. Catalysis depends on Cys401, which acts as the Nucleophile.

This sequence belongs to the class I-like SAM-binding methyltransferase superfamily. RNA M5U methyltransferase family. RlmD subfamily.

It catalyses the reaction uridine(1939) in 23S rRNA + S-adenosyl-L-methionine = 5-methyluridine(1939) in 23S rRNA + S-adenosyl-L-homocysteine + H(+). Its function is as follows. Catalyzes the formation of 5-methyl-uridine at position 1939 (m5U1939) in 23S rRNA. This is 23S rRNA (uracil(1939)-C(5))-methyltransferase RlmD from Shewanella halifaxensis (strain HAW-EB4).